A 307-amino-acid polypeptide reads, in one-letter code: Glutathione synthetase (307 aa).

The 185-residue stretch at 120 to 304 folds into the ATP-grasp domain; that stretch reads KLGALRYSHL…VSDKVIEKLL (185 aa). 146–202 contributes to the ATP binding site; the sequence is AQINHDVVVKPLGGKGGQGVIRLTKDSPGIKAMIELITSQEQLPVMMQKFIPEVKEG. 2 residues coordinate Mg(2+): Glu275 and Asn277.

This sequence belongs to the prokaryotic GSH synthase family. The cofactor is Mg(2+). Mn(2+) serves as cofactor.

It carries out the reaction gamma-L-glutamyl-L-cysteine + glycine + ATP = glutathione + ADP + phosphate + H(+). It functions in the pathway sulfur metabolism; glutathione biosynthesis; glutathione from L-cysteine and L-glutamate: step 2/2. This is Glutathione synthetase from Prochlorococcus marinus subsp. pastoris (strain CCMP1986 / NIES-2087 / MED4).